The primary structure comprises 121 residues: Putative inactive aspartokinase 3 HI_1632 (121 aa).

Belongs to the aspartokinase family.

This Haemophilus influenzae (strain ATCC 51907 / DSM 11121 / KW20 / Rd) protein is Putative inactive aspartokinase 3 HI_1632.